We begin with the raw amino-acid sequence, 566 residues long: Solute carrier family 2, facilitated glucose transporter member 9 (566 aa).

Positions 1–31 (MARKQNRNSKELGLAPLADDTSHAGPPGPGR) are disordered. The Cytoplasmic segment spans residues 1 to 51 (MARKQNRNSKELGLAPLADDTSHAGPPGPGRALLECDHLRSGLPDGRRRKD). Ser-9 bears the Phosphoserine mark. The helical transmembrane segment at 52–72 (WSCSLLVASLAGAFGSSFLYG) threads the bilayer. Over 73 to 107 (YNLSVVNAPTPYIKAFYNESWERRHGRPIDPDTLT) the chain is Extracellular. Residues Asn-74 and Asn-90 are each glycosylated (N-linked (GlcNAc...) asparagine). A helical transmembrane segment spans residues 108-128 (LLWSVTVSIFAIGGLVGTLMV). Over 129-140 (KMIGKVLGRKHT) the chain is Cytoplasmic. Residues 141 to 161 (LLANNGFAISAALLMACSLQA) traverse the membrane as a helical segment. At 162 to 171 (GAFEMLIVGR) the chain is on the extracellular side. A helical transmembrane segment spans residues 172–192 (FIMGIDGGIALSVLPMYLSEI). The Cytoplasmic segment spans residues 193 to 200 (SPKEIRGS). Residues 201-221 (LGQVTAIFICIGVFTGQLLGL) form a helical membrane-spanning segment. At 222–231 (PELLGKESTW) the chain is on the extracellular side. The chain crosses the membrane as a helical span at residues 232 to 252 (PYLFGVIVVPAVVQLLSLPFL). Residues 253–316 (PDSPRYLLLE…LRAPYVRWQV (64 aa)) are Cytoplasmic-facing. The chain crosses the membrane as a helical span at residues 317–337 (VTVIVTMACYQLCGLNAIWFY). Residues 338–354 (TNSIFGKAGIPPAKIPY) lie on the Extracellular side of the membrane. Residues 355–375 (VTLSTGGIETLAAIFSGLVIE) form a helical membrane-spanning segment. Over 376 to 381 (HLGRRP) the chain is Cytoplasmic. Residues 382–402 (LLIGGFGLMALFFGTLTVTLT) form a helical membrane-spanning segment. The Extracellular portion of the chain corresponds to 403 to 415 (LQDRAPWVPYLSI). Residues 416–436 (VGILAIIASFCSGPGGIPFIL) traverse the membrane as a helical segment. Topologically, residues 437–451 (TGEFFQQSQRPAAFI) are cytoplasmic. Residues 452-472 (IAGTVNWLSNFAVGLLFPFIQ) traverse the membrane as a helical segment. The Extracellular segment spans residues 473–478 (KSLDTY). A helical transmembrane segment spans residues 479–499 (CFLVFATICMTGAIYLYFVLP). The Cytoplasmic segment spans residues 500 to 566 (ETKNRTYAEI…YMDDLTFQET (67 aa)). Ser-514 is subject to Phosphoserine. Positions 524–539 (EKIDSAVTDGKTKGRP) are enriched in basic and acidic residues. The segment at 524 to 543 (EKIDSAVTDGKTKGRPEQVS) is disordered.

This sequence belongs to the major facilitator superfamily. Sugar transporter (TC 2.A.1.1) family.

The protein localises to the basolateral cell membrane. Its subcellular location is the apical cell membrane. It carries out the reaction urate(out) = urate(in). High-capacity urate transporter, which may play a role in the urate reabsorption by proximal tubules. May have a residual high-affinity, low-capacity glucose and fructose transporter activity. Transports urate at rates 45- to 60-fold faster than glucose. Does not transport galactose. May mediate small uptake of adenine but not of other nucleobases. This chain is Solute carrier family 2, facilitated glucose transporter member 9, found in Pongo abelii (Sumatran orangutan).